The following is a 420-amino-acid chain: Gamma-glutamyl phosphate reductase (420 aa).

It belongs to the gamma-glutamyl phosphate reductase family.

The protein localises to the cytoplasm. The catalysed reaction is L-glutamate 5-semialdehyde + phosphate + NADP(+) = L-glutamyl 5-phosphate + NADPH + H(+). Its pathway is amino-acid biosynthesis; L-proline biosynthesis; L-glutamate 5-semialdehyde from L-glutamate: step 2/2. Functionally, catalyzes the NADPH-dependent reduction of L-glutamate 5-phosphate into L-glutamate 5-semialdehyde and phosphate. The product spontaneously undergoes cyclization to form 1-pyrroline-5-carboxylate. This is Gamma-glutamyl phosphate reductase from Streptococcus pneumoniae (strain JJA).